The chain runs to 473 residues: Glutamine synthetase (473 aa).

A GS beta-grasp domain is found at 18 to 102 (NNIKWVDLQF…VLTKVFWGGG (85 aa)). The GS catalytic domain maps to 110–473 (PRGIAEEAEK…PMEIYQYLDS (364 aa)). Residues E133 and E135 each coordinate Mg(2+). E207 contacts ATP. Residues E212 and E220 each coordinate Mg(2+). Residues 264 to 265 (NG) and G265 each bind L-glutamate. Residue H269 participates in Mg(2+) binding. ATP-binding positions include 271–273 (HFS) and S273. Residues R324, E330, and R342 each coordinate L-glutamate. ATP-binding residues include R342, R347, and K357. E362 contacts Mg(2+). An L-glutamate-binding site is contributed by R364.

The protein belongs to the glutamine synthetase family. As to quaternary structure, oligomer of 12 subunits arranged in the form of two hexagons. The cofactor is Mg(2+). It depends on Mn(2+) as a cofactor.

The protein localises to the cytoplasm. The catalysed reaction is L-glutamate + NH4(+) + ATP = L-glutamine + ADP + phosphate + H(+). Its activity is regulated as follows. Strongly inhibited by glycine and L-alanine. AMP at 10 mM displays a very weak inhibitory effect. The activity of this enzyme is not controlled by adenylation. Its function is as follows. Probably involved in nitrogen metabolism via ammonium assimilation. Catalyzes the ATP-dependent biosynthesis of glutamine from glutamate and ammonia. This is Glutamine synthetase from Sulfolobus acidocaldarius (strain ATCC 33909 / DSM 639 / JCM 8929 / NBRC 15157 / NCIMB 11770).